The sequence spans 676 residues: RNA helicase NPH-II (676 aa).

Positions 172 to 347 constitute a Helicase ATP-binding domain; it reads FSAWISHRPV…VFLPNPAFIH (176 aa). ATP is bound at residue 185-192; sequence GGTGVGKT. Positions 296–299 match the DEXH box motif; sequence DEVH. Residues 366–535 enclose the Helicase C-terminal domain; sequence NPSSRMAYIE…NYILYANKFN (170 aa).

The protein belongs to the DEAD box helicase family. DEAH subfamily. Monomer.

Its subcellular location is the virion. It carries out the reaction ATP + H2O = ADP + phosphate + H(+). In terms of biological role, NTP-dependent helicase that catalyzes unidirectional unwinding of 3'tailed duplex RNAs and plays an important role during transcription of early mRNAs, presumably by preventing R-loop formation behind the elongating RNA polymerase. Might also play a role in the export of newly synthesized mRNA chains out of the core into the cytoplasm. Required for replication and propagation of viral particles. This Bos taurus (Bovine) protein is RNA helicase NPH-II (OPG084).